We begin with the raw amino-acid sequence, 402 residues long: Phosphoglycerate kinase (402 aa).

Residues 21–23, Arg-36, 59–62, Arg-114, and Arg-147 contribute to the substrate site; these read DLN and HLGR. ATP is bound by residues Lys-202, Glu-329, and 355-358; that span reads GGDT.

It belongs to the phosphoglycerate kinase family. Monomer.

The protein resides in the cytoplasm. The enzyme catalyses (2R)-3-phosphoglycerate + ATP = (2R)-3-phospho-glyceroyl phosphate + ADP. It participates in carbohydrate degradation; glycolysis; pyruvate from D-glyceraldehyde 3-phosphate: step 2/5. The sequence is that of Phosphoglycerate kinase from Psychrobacter sp. (strain PRwf-1).